A 207-amino-acid chain; its full sequence is Hepatic lectin (207 aa).

Methionine 1 carries the post-translational modification N-acetylmethionine. The Cytoplasmic segment spans residues 1–23 (MDEERLSDNVRLYKGGSIRQGLR). The chain crosses the membrane as a helical; Signal-anchor for type II membrane protein span at residues 24 to 48 (SFAAVYVLLALSFLLLTLLSSVSLA). Residues 49–207 (RIAALSSKLS…YYVCEKPLPK (159 aa)) lie on the Extracellular side of the membrane. N-linked (GlcNAc...) asparagine glycosylation is present at asparagine 67. One can recognise a C-type lectin domain in the interval 77–203 (PCGAQSRQWE…TYECYYVCEK (127 aa)). Cystine bridges form between cysteine 78/cysteine 92, cysteine 109/cysteine 201, and cysteine 179/cysteine 193.

In terms of processing, some or all of the cysteines are involved in disulfide bonds.

It localises to the membrane. Hepatic lectin is a membrane receptor protein that recognizes and binds exposed N-acetylglucosamine moieties of plasma glycoproteins, thus mediating their clearance (from the circulation) and endocytosis. The protein is Hepatic lectin of Gallus gallus (Chicken).